A 1335-amino-acid polypeptide reads, in one-letter code: Phospholipid-transporting ATPase IK (1335 aa).

Residues 1-74 lie on the Cytoplasmic side of the membrane; the sequence is MDGVHLGENL…LYEQFHRMSN (74 aa). The chain crosses the membrane as a helical span at residues 75–95; that stretch reads LYFLFIIILQGIPEISTLPWF. Residues 96-295 are Exoplasmic loop-facing; sequence TLFAPLVCLF…LDLMMNKLVA (200 aa). Residues 296-316 traverse the membrane as a helical segment; that stretch reads LIFLSLVIASLLLTVGFTFMV. The Cytoplasmic portion of the chain corresponds to 317–339; sequence KQFKAKHYYMSPTHGRSDAMESF. The helical transmembrane segment at 340-360 threads the bilayer; that stretch reads FIFWGFLILLSVMVPMAMFII. The Exoplasmic loop portion of the chain corresponds to 361–917; sequence AEFIYLGNSI…YMRVCKFLRY (557 aa). D407 functions as the 4-aspartylphosphate intermediate in the catalytic mechanism. ATP-binding residues include D407, K408, T409, E504, F545, K568, R601, T681, G682, D683, R831, and K837. D407 is a binding site for Mg(2+). A Mg(2+)-binding site is contributed by T409. Mg(2+) is bound at residue D857. ATP-binding residues include N860 and D861. Mg(2+) is bound at residue D861. The chain crosses the membrane as a helical span at residues 918-938; the sequence is FFYKTVASMMAQIWFSLVNGF. Residues 939–946 are Cytoplasmic-facing; that stretch reads SAQPLYEG. A helical transmembrane segment spans residues 947–967; sequence WFLALFNLLYSTLPVLYIGLF. Residues 968–995 lie on the Exoplasmic loop side of the membrane; the sequence is EQDVTAEKSLKMPELYMAGQKGELFNYS. Residues 996–1016 form a helical membrane-spanning segment; sequence IFMQAITHGTITSMINFFVTV. Residues 1017 to 1033 are Cytoplasmic-facing; sequence MVSSDMSKAGSSHDYQS. Residues 1034 to 1054 traverse the membrane as a helical segment; that stretch reads LGVLVAISSLLSVTLEVMLVV. K1055 is a topological domain (exoplasmic loop). The chain crosses the membrane as a helical span at residues 1056-1076; that stretch reads YWTLLFVGAVVLSLSSYVLMT. The Cytoplasmic portion of the chain corresponds to 1077-1104; the sequence is SLTQSLWMYRISPKTFPFLFADYNVLFE. Residues 1105–1125 traverse the membrane as a helical segment; that stretch reads PCSLLLIVLNVALNVLPMLAL. The Exoplasmic loop portion of the chain corresponds to 1126 to 1335; the sequence is RTIHRTVLKQ…SQLEVPRKQS (210 aa). Disordered stretches follow at residues 1192–1215, 1236–1280, and 1314–1335; these read VDDS…PLQN, FGKG…GKLL, and SPLW…RKQS. Composition is skewed to polar residues over residues 1246-1255 and 1266-1276; these read PNTSSQTMEK and QKLPTTTSATS.

The protein belongs to the cation transport ATPase (P-type) (TC 3.A.3) family. Type IV subfamily. Mg(2+) is required as a cofactor. As to expression, expressed in testis, specifically in spermatids within seminiferous tubules (at protein level).

The protein resides in the cytoplasmic vesicle. It is found in the secretory vesicle. It localises to the acrosome membrane. Its subcellular location is the endoplasmic reticulum membrane. It carries out the reaction ATP + H2O + phospholipidSide 1 = ADP + phosphate + phospholipidSide 2.. The enzyme catalyses a 1,2-diacyl-sn-glycero-3-phospho-L-serine(out) + ATP + H2O = a 1,2-diacyl-sn-glycero-3-phospho-L-serine(in) + ADP + phosphate + H(+). Its function is as follows. P4-ATPase flippase which catalyzes the hydrolysis of ATP coupled to the transport of aminophospholipids from the outer to the inner leaflet of various membranes and ensures the maintenance of asymmetric distribution of phospholipids. Phospholipid translocation also seems to be implicated in vesicle formation and in uptake of lipid signaling molecules. May be responsible for the maintenance of asymmetric distribution of phosphatidylserine (PS) in spermatozoa membranes. Involved in acrosome reactions and binding of spermatozoa to zona pellucida. This Mus musculus (Mouse) protein is Phospholipid-transporting ATPase IK.